Consider the following 1257-residue polypeptide: Liprin-alpha-2 (1257 aa).

Disordered regions lie at residues 1–29, 231–265, and 438–463; these read MMCE…DSDS, ASSE…DSTD, and EGQL…EHNK. Residues 16 to 26 are compositionally biased toward low complexity; it reads SQRGSQSSGSD. 3 coiled-coil regions span residues 29–154, 185–541, and 643–695; these read SHFE…SLRM, KALD…SLIE, and HSDA…GLNL. Ser236 bears the Phosphoserine mark. At Thr237 the chain carries Phosphothreonine. The span at 238–256 shows a compositional bias: basic and acidic residues; the sequence is ESEHLEGMEPGQKVHEKRL. Residue Ser239 is modified to Phosphoserine. 2 positions are modified to phosphoserine: Ser687 and Ser689. Composition is skewed to low complexity over residues 709-725 and 798-813; these read TASS…HSTP and SSLS…GLGS. Disordered stretches follow at residues 709–738 and 790–834; these read TASS…EMDR and SSYH…KSSI. 2 positions are modified to phosphoserine: Ser817 and Ser820. 3 consecutive SAM domains span residues 898 to 964, 1020 to 1084, and 1108 to 1177; these read WDGP…MVSL, NHEW…LKRL, and WSND…LLAL. Residues 1081 to 1107 adopt a coiled-coil conformation; sequence LKRLNYDRKELERRREASQHEIKDVLV.

Belongs to the liprin family. Liprin-alpha subfamily. As to quaternary structure, forms homodimers and heterodimers with liprins-alpha and liprins-beta. Interacts with the second PTPase domain of PTPRD, PTPRF and PTPRS. Interacts with KIF1A; the interaction decreases in presence of calcium. As to expression, expressed only in brain.

Its subcellular location is the cytoplasm. It localises to the cell surface. The protein resides in the cell projection. It is found in the dendritic spine. Alters PTPRF cellular localization and induces PTPRF clustering. May regulate the disassembly of focal adhesions. May localize receptor-like tyrosine phosphatases type 2A at specific sites on the plasma membrane, possibly regulating their interaction with the extracellular environment and their association with substrates. In neuronal cells, is a scaffolding protein in the dendritic spines which acts as immobile postsynaptic post able to recruit KIF1A-driven dense core vesicles to dendritic spines. The polypeptide is Liprin-alpha-2 (PPFIA2) (Homo sapiens (Human)).